Here is a 220-residue protein sequence, read N- to C-terminus: 26S proteasome non-ATPase regulatory subunit 9 (220 aa).

2 coiled-coil regions span residues 4 to 32 and 61 to 91; these read GTTT…GQIL and RLAR…YHSE. The PDZ domain occupies 102–200; the sequence is RASALDLDSD…QLDLILVPKT (99 aa).

The protein belongs to the proteasome subunit p27 family. Interacts with PI31; this interaction is increased by PI31 ADP-ribosylation. Interacts with Rpt5.

Its function is as follows. Acts as a chaperone during the assembly of the 26S proteasome, specifically of the base subcomplex of the PA700/19S regulatory complex (RC). This chain is 26S proteasome non-ATPase regulatory subunit 9, found in Drosophila melanogaster (Fruit fly).